Consider the following 118-residue polypeptide: Holo-[acyl-carrier-protein] synthase (118 aa).

The Mg(2+) site is built by Asp-8 and Glu-57.

The protein belongs to the P-Pant transferase superfamily. AcpS family. Mg(2+) is required as a cofactor.

The protein resides in the cytoplasm. It carries out the reaction apo-[ACP] + CoA = holo-[ACP] + adenosine 3',5'-bisphosphate + H(+). Transfers the 4'-phosphopantetheine moiety from coenzyme A to a Ser of acyl-carrier-protein. The polypeptide is Holo-[acyl-carrier-protein] synthase (Acholeplasma laidlawii (strain PG-8A)).